Reading from the N-terminus, the 783-residue chain is Protein SEY1 (783 aa).

The Cytoplasmic portion of the chain corresponds to 1–677 (MTSQAIQLID…KRSIVTSSTH (677 aa)). Residues 33–265 (GFNYHVISVF…YLLKPNYHHK (233 aa)) enclose the GB1/RHD3-type G domain. 43-50 (GSQSSGKS) is a binding site for GTP. Residues 449–472 (HEKKLQLRESELNALLSKIKKQLT) are a coiled coil. The helical transmembrane segment at 678-698 (IPIWIYAVIVVLGWNEFMIVI) threads the bilayer. Topologically, residues 699–701 (RNP) are lumenal. A helical transmembrane segment spans residues 702–722 (LFVTLALLSIVSFYFIQKFGL). Residues 723–783 (WGPVMNVVNT…SSSSGNEDSD (61 aa)) lie on the Cytoplasmic side of the membrane.

This sequence belongs to the TRAFAC class dynamin-like GTPase superfamily. GB1/RHD3 GTPase family. RHD3 subfamily.

Its subcellular location is the endoplasmic reticulum membrane. Functionally, cooperates with the reticulon proteins and tubule-shaping DP1 family proteins to generate and maintain the structure of the tubular endoplasmic reticulum network. Has GTPase activity, which is required for its function in ER organization. The sequence is that of Protein SEY1 from Candida glabrata (strain ATCC 2001 / BCRC 20586 / JCM 3761 / NBRC 0622 / NRRL Y-65 / CBS 138) (Yeast).